The primary structure comprises 258 residues: Acetylglutamate kinase (258 aa).

Substrate is bound by residues 40 to 41, Arg-62, and Asn-158; that span reads GG.

It belongs to the acetylglutamate kinase family. ArgB subfamily.

The protein resides in the cytoplasm. The catalysed reaction is N-acetyl-L-glutamate + ATP = N-acetyl-L-glutamyl 5-phosphate + ADP. It functions in the pathway amino-acid biosynthesis; L-arginine biosynthesis; N(2)-acetyl-L-ornithine from L-glutamate: step 2/4. In terms of biological role, catalyzes the ATP-dependent phosphorylation of N-acetyl-L-glutamate. The protein is Acetylglutamate kinase of Azobacteroides pseudotrichonymphae genomovar. CFP2.